The following is a 657-amino-acid chain: Single-minded homolog 2 (657 aa).

A bHLH domain is found at 1-53; that stretch reads MKEKSKNAAKTRREKENGEFYELAKLLPLPSAITSQLDKASIIRLTTSYLKMR. PAS domains lie at 77–147 and 218–288; these read AKEL…PPLH and PPSA…LVKG. The region spanning 218–288 is the PAC domain; the sequence is PPSAITEIKL…YAHHLLLVKG (71 aa). The region spanning 336–657 is the Single-minded C-terminal domain; that stretch reads EYKELQLSLD…GASVIITNGR (322 aa). Residues 354-364 are compositionally biased toward polar residues; the sequence is ESWRTTLSTSQ. Disordered stretches follow at residues 354-387 and 612-641; these read ESWR…NPYP and LGSA…APGA. The Nuclear localization signal signature appears at 367-386; the sequence is RKSAKPKNTKMKTKLRTNPY. Residues 369-381 show a composition bias toward basic residues; sequence SAKPKNTKMKTKL.

In terms of assembly, efficient DNA binding requires dimerization with another bHLH protein. Heterodimer of SIM2 and ARNT. As to expression, transcripts were detected in high levels in kidney followed by skeletal muscle and lung. Low levels were found in testis, brain and heart. In early fetal development it is found in CNS, developing kidney, tongue epithelium and cartilage primordia.

It is found in the nucleus. In terms of biological role, transcription factor that may be a master gene of CNS development in cooperation with Arnt. It may have pleiotropic effects in the tissues expressed during development. The protein is Single-minded homolog 2 (Sim2) of Mus musculus (Mouse).